A 305-amino-acid chain; its full sequence is Methionyl-tRNA formyltransferase (305 aa).

109-112 (SLLP) provides a ligand contact to (6S)-5,6,7,8-tetrahydrofolate.

The protein belongs to the Fmt family.

The enzyme catalyses L-methionyl-tRNA(fMet) + (6R)-10-formyltetrahydrofolate = N-formyl-L-methionyl-tRNA(fMet) + (6S)-5,6,7,8-tetrahydrofolate + H(+). In terms of biological role, attaches a formyl group to the free amino group of methionyl-tRNA(fMet). The formyl group appears to play a dual role in the initiator identity of N-formylmethionyl-tRNA by promoting its recognition by IF2 and preventing the misappropriation of this tRNA by the elongation apparatus. The protein is Methionyl-tRNA formyltransferase of Roseobacter denitrificans (strain ATCC 33942 / OCh 114) (Erythrobacter sp. (strain OCh 114)).